The chain runs to 265 residues: Oxidoreductase nsrR (265 aa).

Belongs to the avfA family.

Its pathway is secondary metabolite biosynthesis. Functionally, oxidoreductase; part of the gene cluster that mediates the biosynthesis of the tetrahydroxanthone dimer neosartorin, which exhibits antibacterial activity. The two different monomeric units appear to be synthesized by the same set of enzymes, among which the Baeyer-Villiger monooxygenase nsrF is the key enzyme for the divergence of the biosynthetic routes. The pathway begins with the synthesis of atrochrysone thioester by the polyketide synthase nsrB. The atrochrysone carboxyl ACP thioesterase nsrC then breaks the thioester bond and releases the atrochrysone carboxylic acid from AacuL. Atrochrysone carboxylic acid is decarboxylated by the decarboxylase nsrE, and oxidized by the anthrone oxygenase nsrD to yield emodin. Emodin is then reduced to emodin hydroquinone by the oxidoreductase nsrR. A-ring reduction by the short chain dehydrogenase nsrJ, dehydration by the scytalone dehydratase-like protein nsrI and probable spontaneous re-oxidation, results in overall deoxygenation to chrysophanol. The Baeyer-Villiger monooxygenase nsrF accepts chrysophanol as a substrate to insert one oxygen atom at two different positions to yield the precursors of both monomric units. NsrF is promiscuous/flexible in interacting with the 2 (non methylated and methylated) aromatic rings of chrysophanol, thus diverging the biosynthetic pathway at this point. After the hydrolysis of the lactones, methylesterification by the methyltransferase nsrG yields respectively moniliphenone and 2,2',6'-trihydroxy-4-methyl-6-methoxya-cyldiphenylmethanone. The next steps are the hydroxylation by the FAD-dependent monooxygenase nsrK, followed by isomerization by the monooxygenase nsrQ. The short chain dehydrogenase/reductase nsrO then catalyzes the C-5 ketoreduction to give the xanthone skeleton of blennolide C and 5-acetylblennolide A. The acetyltransferase nsrL has a strict substrate specificity and uses only blennolide A but not blennolide C to yield 5-acetylblennolide A as the single-acetylated product. In the final step of the biosynthesis, the heterodimerization of the 2 xanthones, blennolide C and 5-acetylblennolide A, is catalyzed by the cytochrome P450 monooxygenase nsrP. NsrP can utilize at least three different xanthones as its substrates to perform the dimerization reaction. The chain is Oxidoreductase nsrR from Aspergillus novofumigatus (strain IBT 16806).